The following is a 290-amino-acid chain: Bifunctional protein FolD (290 aa).

NADP(+) is bound by residues 167 to 169, Ser-192, and Ile-233; that span reads GRS.

Belongs to the tetrahydrofolate dehydrogenase/cyclohydrolase family. As to quaternary structure, homodimer.

It carries out the reaction (6R)-5,10-methylene-5,6,7,8-tetrahydrofolate + NADP(+) = (6R)-5,10-methenyltetrahydrofolate + NADPH. It catalyses the reaction (6R)-5,10-methenyltetrahydrofolate + H2O = (6R)-10-formyltetrahydrofolate + H(+). The protein operates within one-carbon metabolism; tetrahydrofolate interconversion. Catalyzes the oxidation of 5,10-methylenetetrahydrofolate to 5,10-methenyltetrahydrofolate and then the hydrolysis of 5,10-methenyltetrahydrofolate to 10-formyltetrahydrofolate. The protein is Bifunctional protein FolD of Azorhizobium caulinodans (strain ATCC 43989 / DSM 5975 / JCM 20966 / LMG 6465 / NBRC 14845 / NCIMB 13405 / ORS 571).